Consider the following 307-residue polypeptide: Opsin-like protein carO (307 aa).

Asn28 carries N-linked (GlcNAc...) asparagine glycosylation. The next 7 membrane-spanning stretches (helical) occupy residues 36 to 56 (WYWAVCAVMTVSTFAFLGLGM), 64 to 84 (IFHYITAGITMIASIAYFTMA), 118 to 138 (WFLTTPLLLTDLLLTAGMPWP), 140 to 160 (VLWVILVDWVMIVTGLVGALV), 166 to 186 (WGYFAFGCAALAYIVYVLAWE), 202 to 222 (FVMCGSLTAVVWILYPIAWGV), and 235 to 255 (AVFYGILDLIAKPVFGALLLW). Positions 280 to 307 (GPNNKVASGHGARNDTATASGSNVNPNA) are disordered. Asn293 carries an N-linked (GlcNAc...) asparagine glycan. Positions 294–307 (DTATASGSNVNPNA) are enriched in polar residues.

This sequence belongs to the archaeal/bacterial/fungal opsin family.

The protein resides in the membrane. Opsin-like protein; part of the car gene cluster that mediates the biosynthesis of neurosporaxanthin, a carboxylic apocarotenoid acting as an essential protective pigment and leading to orange pigmentation. The exact role of carO in carotenoid biosynthesis is not known yet, but it could be involved in the regulation of the pathway by light or other stimuli. This Fusarium fujikuroi (Bakanae and foot rot disease fungus) protein is Opsin-like protein carO.